Reading from the N-terminus, the 334-residue chain is Terpene synthase 1 (334 aa).

2 residues coordinate Mg(2+): Asp-82 and Asp-86. The D(D/E)XX(D/E) motif signature appears at Asp-82–Asp-86. Arg-184 provides a ligand contact to substrate. Asn-230, Ser-234, and Glu-238 together coordinate Mg(2+). An NSE motif motif is present at residues Asn-230–Glu-238. The WxxxxxRY motif motif lies at Trp-309–Tyr-316.

The protein belongs to the terpene synthase family. Requires Mg(2+) as cofactor.

It catalyses the reaction (2E,6E)-farnesyl diphosphate = gamma-muurolene + diphosphate. The catalysed reaction is (2E,6E)-farnesyl diphosphate = alpha-muurolene + diphosphate. The enzyme catalyses (2E,6E)-farnesyl diphosphate = (-)-(E)-beta-caryophyllene + diphosphate. It carries out the reaction (2E)-geranyl diphosphate = beta-myrcene + diphosphate. Functionally, terpene synthase that catalyzes the cyclization of farnesyl diphosphate (FPP) into a mixture of sesquiterpenes with gamma-muurolene as the most abundant compound and (-)-beta-caryophyllene, alpha-muurolene, and 4 unidentified sesquiterpenes as minor compoundss. TPS1 also shows monoterpene synthase activity and can also use geranyl diphosphate (GPP) as a substrate to convert it into a mixture of cyclic and acyclic monoterpenes, including myrcene and linalool. P.polycephalum has a unique biology and these volatile terpenoids could function in internal communication of P.polycephalum, to mark the territory that have been explored, or they may be involved in chemotaxis. In Physarum polycephalum (Slime mold), this protein is Terpene synthase 1.